Reading from the N-terminus, the 78-residue chain is Small ribosomal subunit protein bS20 (78 aa).

Belongs to the bacterial ribosomal protein bS20 family.

Functionally, binds directly to 16S ribosomal RNA. This is Small ribosomal subunit protein bS20 from Streptococcus pneumoniae serotype 2 (strain D39 / NCTC 7466).